We begin with the raw amino-acid sequence, 165 residues long: MTSSDPQSHNVFVYGSILEPAVAAVILDRTADTVPAVLHGYHRYKLKGLPYPCIVSSDSGKVNGKVITGVSDAELNNFDVIEGNDYERVTVEVVRMDNSEKVKVETYVWVNKDDPRMYGEWDFEEWRVVHAEKFVETFRKMLEWNKNPNGKSMEEAVGSLLSSGD.

Tyr-14 to Glu-19 contributes to the substrate binding site. The active-site Proton acceptor is Glu-82.

This sequence belongs to the gamma-glutamylcyclotransferase family. As to expression, expressed in floral organs, leaves, stems and roots.

Functionally, putative gamma-glutamylcyclotransferase. This Arabidopsis thaliana (Mouse-ear cress) protein is Protein AIG2 C.